A 369-amino-acid polypeptide reads, in one-letter code: tRNA 2-selenouridine synthase (369 aa).

One can recognise a Rhodanese domain in the interval 15–138 (FIAGQPLIDL…MRQYLIGVIE (124 aa)). Catalysis depends on Cys-98, which acts as the S-selanylcysteine intermediate.

The protein belongs to the SelU family. As to quaternary structure, monomer.

It catalyses the reaction 5-methylaminomethyl-2-thiouridine(34) in tRNA + selenophosphate + (2E)-geranyl diphosphate + H2O + H(+) = 5-methylaminomethyl-2-selenouridine(34) in tRNA + (2E)-thiogeraniol + phosphate + diphosphate. The enzyme catalyses 5-methylaminomethyl-2-thiouridine(34) in tRNA + (2E)-geranyl diphosphate = 5-methylaminomethyl-S-(2E)-geranyl-thiouridine(34) in tRNA + diphosphate. It carries out the reaction 5-methylaminomethyl-S-(2E)-geranyl-thiouridine(34) in tRNA + selenophosphate + H(+) = 5-methylaminomethyl-2-(Se-phospho)selenouridine(34) in tRNA + (2E)-thiogeraniol. The catalysed reaction is 5-methylaminomethyl-2-(Se-phospho)selenouridine(34) in tRNA + H2O = 5-methylaminomethyl-2-selenouridine(34) in tRNA + phosphate. In terms of biological role, involved in the post-transcriptional modification of the uridine at the wobble position (U34) of tRNA(Lys), tRNA(Glu) and tRNA(Gln). Catalyzes the conversion of 2-thiouridine (S2U-RNA) to 2-selenouridine (Se2U-RNA). Acts in a two-step process involving geranylation of 2-thiouridine (S2U) to S-geranyl-2-thiouridine (geS2U) and subsequent selenation of the latter derivative to 2-selenouridine (Se2U) in the tRNA chain. The protein is tRNA 2-selenouridine synthase of Shewanella sp. (strain MR-7).